The chain runs to 120 residues: V-type proton ATPase subunit F (120 aa).

Belongs to the V-ATPase F subunit family. As to quaternary structure, V-ATPase is a heteromultimeric enzyme composed of a peripheral catalytic V1 complex (components A to H) attached to an integral membrane V0 proton pore complex (components: a, c, c', c'' and d).

In terms of biological role, subunit of the peripheral V1 complex of vacuolar ATPase essential for assembly or catalytic function. V-ATPase is responsible for acidifying a variety of intracellular compartments in eukaryotic cells. The sequence is that of V-type proton ATPase subunit F (vatF) from Dictyostelium discoideum (Social amoeba).